The primary structure comprises 401 residues: Argininosuccinate synthase (401 aa).

ATP-binding positions include 7 to 15 (AYSGGLDTS) and Ala34. Tyr85 and Ser90 together coordinate L-citrulline. Gly115 contributes to the ATP binding site. L-aspartate-binding residues include Thr117, Asn121, and Asp122. Asn121 contributes to the L-citrulline binding site. Arg125, Ser174, Ser183, Glu259, and Tyr271 together coordinate L-citrulline.

The protein belongs to the argininosuccinate synthase family. Type 1 subfamily. In terms of assembly, homotetramer.

It localises to the cytoplasm. It carries out the reaction L-citrulline + L-aspartate + ATP = 2-(N(omega)-L-arginino)succinate + AMP + diphosphate + H(+). It participates in amino-acid biosynthesis; L-arginine biosynthesis; L-arginine from L-ornithine and carbamoyl phosphate: step 2/3. This Desulforamulus reducens (strain ATCC BAA-1160 / DSM 100696 / MI-1) (Desulfotomaculum reducens) protein is Argininosuccinate synthase.